The primary structure comprises 369 residues: Protein-glutamate methylesterase/protein-glutamine glutaminase (369 aa).

Residues 6–122 (RAVVADDSHF…SMEMSRLKDQ (117 aa)) enclose the Response regulatory domain. The residue at position 56 (Asp-56) is a 4-aspartylphosphate. The tract at residues 136 to 178 (GATGSRSGTGSDSGTAPTTAGGSATDRRGTGGSSGQTTYVANP) is disordered. The segment covering 138-159 (TGSRSGTGSDSGTAPTTAGGSA) has biased composition (low complexity). In terms of domain architecture, CheB-type methylesterase spans 173–367 (TYVANPTLVI…DGVIDTITTE (195 aa)). Residues Ser-185, His-212, and Asp-309 contribute to the active site.

This sequence belongs to the CheB family. Post-translationally, phosphorylated by CheA. Phosphorylation of the N-terminal regulatory domain activates the methylesterase activity.

It is found in the cytoplasm. The catalysed reaction is [protein]-L-glutamate 5-O-methyl ester + H2O = L-glutamyl-[protein] + methanol + H(+). It carries out the reaction L-glutaminyl-[protein] + H2O = L-glutamyl-[protein] + NH4(+). Its function is as follows. Involved in chemotaxis. Part of a chemotaxis signal transduction system that modulates chemotaxis in response to various stimuli. Catalyzes the demethylation of specific methylglutamate residues introduced into the chemoreceptors (methyl-accepting chemotaxis proteins or MCP) by CheR. Also mediates the irreversible deamidation of specific glutamine residues to glutamic acid. This is Protein-glutamate methylesterase/protein-glutamine glutaminase from Haloarcula marismortui (strain ATCC 43049 / DSM 3752 / JCM 8966 / VKM B-1809) (Halobacterium marismortui).